The primary structure comprises 513 residues: Maturase K (513 aa).

Belongs to the intron maturase 2 family. MatK subfamily.

Its subcellular location is the plastid. The protein localises to the chloroplast. In terms of biological role, usually encoded in the trnK tRNA gene intron. Probably assists in splicing its own and other chloroplast group II introns. The sequence is that of Maturase K from Arundo donax (Giant reed).